The chain runs to 438 residues: Tyrosine--tRNA ligase (438 aa).

Tyr47 lines the L-tyrosine pocket. The short motif at Pro52–Gly61 is the 'HIGH' region element. Residues Tyr183 and Gln187 each coordinate L-tyrosine. A 'KMSKS' region motif is present at residues Lys243–Thr247. Lys246 serves as a coordination point for ATP. Positions Leu370–Ile436 constitute an S4 RNA-binding domain.

This sequence belongs to the class-I aminoacyl-tRNA synthetase family. TyrS type 1 subfamily. Homodimer.

It localises to the cytoplasm. It catalyses the reaction tRNA(Tyr) + L-tyrosine + ATP = L-tyrosyl-tRNA(Tyr) + AMP + diphosphate + H(+). Its function is as follows. Catalyzes the attachment of tyrosine to tRNA(Tyr) in a two-step reaction: tyrosine is first activated by ATP to form Tyr-AMP and then transferred to the acceptor end of tRNA(Tyr). This Rhodopirellula baltica (strain DSM 10527 / NCIMB 13988 / SH1) protein is Tyrosine--tRNA ligase.